The chain runs to 137 residues: Small ribosomal subunit protein uS12 (137 aa).

A disordered region spans residues 33–57 (KVQTNVSSPQKRGVATRVGTMTPKK). 3-methylthioaspartic acid is present on Asp102.

The protein belongs to the universal ribosomal protein uS12 family. In terms of assembly, part of the 30S ribosomal subunit. Contacts proteins S8 and S17. May interact with IF1 in the 30S initiation complex.

Its function is as follows. With S4 and S5 plays an important role in translational accuracy. In terms of biological role, interacts with and stabilizes bases of the 16S rRNA that are involved in tRNA selection in the A site and with the mRNA backbone. Located at the interface of the 30S and 50S subunits, it traverses the body of the 30S subunit contacting proteins on the other side and probably holding the rRNA structure together. The combined cluster of proteins S8, S12 and S17 appears to hold together the shoulder and platform of the 30S subunit. The chain is Small ribosomal subunit protein uS12 from Streptococcus thermophilus (strain CNRZ 1066).